Consider the following 118-residue polypeptide: Large ribosomal subunit protein uL24 (118 aa).

It belongs to the universal ribosomal protein uL24 family. Part of the 50S ribosomal subunit.

Its function is as follows. One of two assembly initiator proteins, it binds directly to the 5'-end of the 23S rRNA, where it nucleates assembly of the 50S subunit. Functionally, one of the proteins that surrounds the polypeptide exit tunnel on the outside of the subunit. The chain is Large ribosomal subunit protein uL24 from Prochlorococcus marinus (strain NATL1A).